The chain runs to 166 residues: 2S seed storage protein 4 (166 aa).

A signal peptide spans 1–21 (MANKLFLVCAALALCFILTNA). 2 propeptides span residues 22-37 (SVYRTVVEFDEDDASN) and 73-88 (GPSLDDEFDMEDDIEN).

Belongs to the 2S seed storage albumins family. As to quaternary structure, the mature protein consists of a small and a large chain linked by disulfide bonds.

This is a 2S seed storage protein. The sequence is that of 2S seed storage protein 4 (AT2S4) from Arabidopsis thaliana (Mouse-ear cress).